Consider the following 958-residue polypeptide: Voltage-gated inwardly rectifying potassium channel KCNH6 (958 aa).

Topologically, residues 1–261 (MPVRRGHVAP…YSPFKAVWDW (261 aa)) are cytoplasmic. Positions 41-70 (IIYCNDGFCELFGYSRVEVMQQPCTCDFLT) constitute a PAS domain. A PAC domain is found at 92–144 (CKVDILYYRKDASSFRCLVDVVPVKNEDGAVIMFILNFEDLAQLLAKCSSRSL). A helical membrane pass occupies residues 262–282 (LILLLVIYTAVFTPYSAAFLL). The Extracellular portion of the chain corresponds to 283-298 (SDQDESRRGACSYTCS). A helical membrane pass occupies residues 299 to 319 (PLTVVDLIVDIMFVVDIVINF). Residues 320–340 (RTTYVNTNDEVVSHPRRIAVH) are Cytoplasmic-facing. A helical transmembrane segment spans residues 341–361 (YFKGWFLIDMVAAIPFDLLIF). The Extracellular segment spans residues 362–370 (RTGSDETTT). A helical; Voltage-sensor membrane pass occupies residues 371-391 (LIGLLKTARLLRLVRVARKLD). Residues 392-398 (RYSEYGA) lie on the Cytoplasmic side of the membrane. The helical transmembrane segment at 399–419 (AVLFLLMCTFALIAHWLACIW) threads the bilayer. The Extracellular portion of the chain corresponds to 420–463 (YAIGNVERPYLEHKIGWLDSLGVQLGKRYNGSDPASGPSVQDKY). Asn449 carries an N-linked (GlcNAc...) (complex) asparagine glycan. The segment at residues 464-484 (VTALYFTFSSLTSVGFGNVSP) is an intramembrane region (pore-forming). Residues 476-481 (SVGFGN) carry the Selectivity filter motif. Residues 485–490 (NTNSEK) lie on the Extracellular side of the membrane. Residues 491–511 (VFSICVMLIGSLMYASIFGNV) traverse the membrane as a helical segment. Residues 512-958 (SAIIQRLYSG…DPGFAGSWGH (447 aa)) lie on the Cytoplasmic side of the membrane. A cNMP-binding domain region spans residues 594–694 (AFSGAGKGCL…IQRADLLEVL (101 aa)). Disordered regions lie at residues 720-751 (GLHS…PPLS) and 845-910 (TTSP…PPLA). Over residues 724-745 (SPRQAPGSQDHQGFFLSDNQSD) the composition is skewed to polar residues.

This sequence belongs to the potassium channel family. H (Eag) (TC 1.A.1.20) subfamily. Kv11.2/KCNH6 sub-subfamily. The potassium channel is probably composed of a homo- or heterotetrameric complex of pore-forming alpha subunits that can associate only within their subfamily. In terms of tissue distribution, expressed in prolactin-secreting adenomas.

The protein localises to the cell membrane. It carries out the reaction K(+)(in) = K(+)(out). Pore-forming (alpha) subunit of voltage-gated inwardly rectifying potassium channel. Characterized by unusual gating kinetics by producing relatively small outward currents during membrane depolarization and large inward currents during subsequent repolarization which reflect a rapid inactivation during depolarization and quick recovery from inactivation but slow deactivation (closing) during repolarization. Activates even more slowly than KCNH2. This chain is Voltage-gated inwardly rectifying potassium channel KCNH6, found in Homo sapiens (Human).